We begin with the raw amino-acid sequence, 472 residues long: ATP synthase subunit beta (472 aa).

160 to 167 (GGAGVGKT) provides a ligand contact to ATP.

The protein belongs to the ATPase alpha/beta chains family. In terms of assembly, F-type ATPases have 2 components, CF(1) - the catalytic core - and CF(0) - the membrane proton channel. CF(1) has five subunits: alpha(3), beta(3), gamma(1), delta(1), epsilon(1). CF(0) has three main subunits: a(1), b(2) and c(9-12). The alpha and beta chains form an alternating ring which encloses part of the gamma chain. CF(1) is attached to CF(0) by a central stalk formed by the gamma and epsilon chains, while a peripheral stalk is formed by the delta and b chains.

It localises to the cell membrane. It carries out the reaction ATP + H2O + 4 H(+)(in) = ADP + phosphate + 5 H(+)(out). Functionally, produces ATP from ADP in the presence of a proton gradient across the membrane. The catalytic sites are hosted primarily by the beta subunits. The protein is ATP synthase subunit beta of Lachnoclostridium phytofermentans (strain ATCC 700394 / DSM 18823 / ISDg) (Clostridium phytofermentans).